Consider the following 352-residue polypeptide: Peptide chain release factor 1 (352 aa).

Residue Q229 is modified to N5-methylglutamine.

This sequence belongs to the prokaryotic/mitochondrial release factor family. In terms of processing, methylated by PrmC. Methylation increases the termination efficiency of RF1.

It localises to the cytoplasm. Its function is as follows. Peptide chain release factor 1 directs the termination of translation in response to the peptide chain termination codons UAG and UAA. In Gluconacetobacter diazotrophicus (strain ATCC 49037 / DSM 5601 / CCUG 37298 / CIP 103539 / LMG 7603 / PAl5), this protein is Peptide chain release factor 1.